The sequence spans 551 residues: Eukaryotic translation initiation factor 3 subunit D-2 (551 aa).

The segment at 105 to 152 is disordered; sequence NNVRARGRTGRGSQAVGGPGGPAAGGSTANSTKYGKGRNTRNTQNVGR. The segment covering 119 to 128 has biased composition (gly residues); that stretch reads AVGGPGGPAA. The segment at 290–304 is RNA gate; that stretch reads QFDLLTVNETSLEPP.

Belongs to the eIF-3 subunit D family. Component of the eukaryotic translation initiation factor 3 (eIF-3) complex. The eIF-3 complex interacts with pix.

It localises to the cytoplasm. Its function is as follows. mRNA cap-binding component of the eukaryotic translation initiation factor 3 (eIF-3) complex, which is involved in protein synthesis of a specialized repertoire of mRNAs and, together with other initiation factors, stimulates binding of mRNA and methionyl-tRNAi to the 40S ribosome. The eIF-3 complex specifically targets and initiates translation of a subset of mRNAs involved in cell proliferation. In the eIF-3 complex, eif3d specifically recognizes and binds the 7-methylguanosine cap of a subset of mRNAs. This Drosophila erecta (Fruit fly) protein is Eukaryotic translation initiation factor 3 subunit D-2.